Reading from the N-terminus, the 265-residue chain is Mlc titration factor A (265 aa).

Positions 111, 148, 152, and 211 each coordinate Zn(2+).

The protein belongs to the MtfA family. Interacts with Mlc. Requires Zn(2+) as cofactor.

Its subcellular location is the cytoplasm. Functionally, involved in the modulation of the activity of the glucose-phosphotransferase system (glucose-PTS). Interacts with the transcriptional repressor Mlc, preventing its interaction with DNA and leading to the modulation of expression of genes regulated by Mlc, including ptsG, which encodes the PTS system glucose-specific EIICB component. In terms of biological role, shows zinc-dependent metallopeptidase activity. The polypeptide is Mlc titration factor A (Escherichia coli O127:H6 (strain E2348/69 / EPEC)).